The chain runs to 129 residues: Small ribosomal subunit protein uS11 (129 aa).

This sequence belongs to the universal ribosomal protein uS11 family. As to quaternary structure, part of the 30S ribosomal subunit. Interacts with proteins S7 and S18. Binds to IF-3.

Functionally, located on the platform of the 30S subunit, it bridges several disparate RNA helices of the 16S rRNA. Forms part of the Shine-Dalgarno cleft in the 70S ribosome. This is Small ribosomal subunit protein uS11 from Oleidesulfovibrio alaskensis (strain ATCC BAA-1058 / DSM 17464 / G20) (Desulfovibrio alaskensis).